Here is a 568-residue protein sequence, read N- to C-terminus: MARVEL domain-containing protein 2 (568 aa).

Disordered regions lie at residues 1-72 (MSGG…YPSD) and 116-163 (SGGV…SYNS). The Cytoplasmic portion of the chain corresponds to 1-211 (MSGGGSSSGP…YMKSWAGLLR (211 aa)). Basic and acidic residues predominate over residues 29 to 46 (ADPRHPETNLETLHDRDL). The span at 52 to 62 (PLPPPPLPLHP) shows a compositional bias: pro residues. An MARVEL domain is found at 205 to 379 (SWAGLLRILC…SAMVSLKLWR (175 aa)). Residues 212–232 (ILCIVELLLGAAVFACVTAYI) traverse the membrane as a helical segment. Residues 233-266 (HKDNEWYNMFGYSQPYGYTASMQGGYYYSGPKTP) lie on the Extracellular side of the membrane. The helical transmembrane segment at 267-287 (FVLVVAGLAWIVTIILLVLGM) threads the bilayer. Residues 288–303 (SMYYRTILLDSTWWPL) are Cytoplasmic-facing. The chain crosses the membrane as a helical span at residues 304 to 324 (TEFGINISLFILYMAGAIVYV). Topologically, residues 325 to 354 (NDTNRGGLCYYQLFNTPVNASFCRVEGGQT) are extracellular. Residues 355 to 375 (AAIIFLFVSMLMYFISAMVSL) form a helical membrane-spanning segment. The Cytoplasmic portion of the chain corresponds to 376–568 (KLWRHESARK…KVMDWNDGYN (193 aa)). In terms of domain architecture, OCEL spans 451 to 562 (PDYVAKYQAI…RIQEYDKVMD (112 aa)). The stretch at 462 to 559 (AEDERERYKA…IKQRIQEYDK (98 aa)) forms a coiled coil.

The protein belongs to the ELL/occludin family.

It is found in the cell membrane. Its subcellular location is the cell junction. It localises to the tight junction. Functionally, may play a role in the formation of the epithelial barrier. This Xenopus tropicalis (Western clawed frog) protein is MARVEL domain-containing protein 2 (marveld2).